The sequence spans 192 residues: 7-methyl-GTP pyrophosphatase (192 aa).

Asp-69 functions as the Proton acceptor in the catalytic mechanism.

The protein belongs to the Maf family. YceF subfamily. The cofactor is a divalent metal cation.

The protein localises to the cytoplasm. The enzyme catalyses N(7)-methyl-GTP + H2O = N(7)-methyl-GMP + diphosphate + H(+). In terms of biological role, nucleoside triphosphate pyrophosphatase that hydrolyzes 7-methyl-GTP (m(7)GTP). May have a dual role in cell division arrest and in preventing the incorporation of modified nucleotides into cellular nucleic acids. This is 7-methyl-GTP pyrophosphatase from Pseudomonas fluorescens (strain Pf0-1).